A 276-amino-acid chain; its full sequence is UPF0276 protein AM1_3026 (276 aa).

Belongs to the UPF0276 family.

The protein is UPF0276 protein AM1_3026 of Acaryochloris marina (strain MBIC 11017).